Consider the following 198-residue polypeptide: Protein ORFi in retron Ec67 (198 aa).

This sequence belongs to the CI repressor protein family.

This Escherichia coli protein is Protein ORFi in retron Ec67.